A 648-amino-acid chain; its full sequence is 1-deoxy-D-xylulose-5-phosphate synthase (648 aa).

Thiamine diphosphate-binding positions include histidine 73 and 114–116 (SHA). Aspartate 145 is a binding site for Mg(2+). Thiamine diphosphate is bound by residues 146-147 (GA), asparagine 175, tyrosine 286, and glutamate 367. Asparagine 175 contributes to the Mg(2+) binding site.

This sequence belongs to the transketolase family. DXPS subfamily. Homodimer. The cofactor is Mg(2+). Thiamine diphosphate is required as a cofactor.

It catalyses the reaction D-glyceraldehyde 3-phosphate + pyruvate + H(+) = 1-deoxy-D-xylulose 5-phosphate + CO2. It functions in the pathway metabolic intermediate biosynthesis; 1-deoxy-D-xylulose 5-phosphate biosynthesis; 1-deoxy-D-xylulose 5-phosphate from D-glyceraldehyde 3-phosphate and pyruvate: step 1/1. In terms of biological role, catalyzes the acyloin condensation reaction between C atoms 2 and 3 of pyruvate and glyceraldehyde 3-phosphate to yield 1-deoxy-D-xylulose-5-phosphate (DXP). The polypeptide is 1-deoxy-D-xylulose-5-phosphate synthase (Rhodococcus erythropolis (strain PR4 / NBRC 100887)).